The primary structure comprises 307 residues: tRNA pseudouridine synthase B (307 aa).

The Nucleophile role is filled by D38.

It belongs to the pseudouridine synthase TruB family. Type 1 subfamily.

It carries out the reaction uridine(55) in tRNA = pseudouridine(55) in tRNA. Its function is as follows. Responsible for synthesis of pseudouridine from uracil-55 in the psi GC loop of transfer RNAs. The sequence is that of tRNA pseudouridine synthase B from Bacillus cytotoxicus (strain DSM 22905 / CIP 110041 / 391-98 / NVH 391-98).